The following is a 254-amino-acid chain: UPF0328 protein ECU01_0070/ECU01_1540/ECU02_1570/ECU04_0080/ECU08_2100 (254 aa).

This sequence belongs to the UPF0328 family.

The chain is UPF0328 protein ECU01_0070/ECU01_1540/ECU02_1570/ECU04_0080/ECU08_2100 from Encephalitozoon cuniculi (strain GB-M1) (Microsporidian parasite).